A 65-amino-acid polypeptide reads, in one-letter code: Large ribosomal subunit protein bL35 (65 aa).

The disordered stretch occupies residues 1-30; that stretch reads MPKMKTNRGAAKRFRKTASGRFKSKQSHLR. Positions 10 to 30 are enriched in basic residues; sequence AAKRFRKTASGRFKSKQSHLR.

The protein belongs to the bacterial ribosomal protein bL35 family.

This chain is Large ribosomal subunit protein bL35, found in Pseudoalteromonas atlantica (strain T6c / ATCC BAA-1087).